A 506-amino-acid chain; its full sequence is Aerotaxis receptor (506 aa).

Residues 1 to 166 are Cytoplasmic-facing; sequence MSSHPYVTQQ…PSLPLRWRAR (166 aa). Residues 167 to 186 traverse the membrane as a helical segment; that stretch reads GVMTLMFILLAAMLWFVAAP. Residues 187 to 190 are Periplasmic-facing; it reads VVTY. Residues 191-209 traverse the membrane as a helical segment; that stretch reads ILCALVVLLASACFEWQIV. Topologically, residues 210-506 are cytoplasmic; the sequence is RPIENVAHQA…RLEDAVTVLH (297 aa). The Methyl-accepting transducer domain occupies 263–492; sequence QVSSVRNGSE…ESAQVSAMVK (230 aa).

It belongs to the methyl-accepting chemotaxis (MCP) protein family.

The protein resides in the cell inner membrane. Signal transducer for aerotaxis. The aerotactic response is the accumulation of cells around air bubbles. The nature of the sensory stimulus detected by this protein is the proton motive force or cellular redox state. It uses a FAD prosthetic group as a redox sensor to monitor oxygen levels. This Escherichia coli (strain K12) protein is Aerotaxis receptor (aer).